A 189-amino-acid polypeptide reads, in one-letter code: Peptidyl-tRNA hydrolase (189 aa).

A tRNA-binding site is contributed by Phe15. His20 serves as the catalytic Proton acceptor. Residues Tyr65, Asn67, and Asn113 each contribute to the tRNA site.

The protein belongs to the PTH family. As to quaternary structure, monomer.

The protein localises to the cytoplasm. The catalysed reaction is an N-acyl-L-alpha-aminoacyl-tRNA + H2O = an N-acyl-L-amino acid + a tRNA + H(+). Its function is as follows. Hydrolyzes ribosome-free peptidyl-tRNAs (with 1 or more amino acids incorporated), which drop off the ribosome during protein synthesis, or as a result of ribosome stalling. Functionally, catalyzes the release of premature peptidyl moieties from peptidyl-tRNA molecules trapped in stalled 50S ribosomal subunits, and thus maintains levels of free tRNAs and 50S ribosomes. The polypeptide is Peptidyl-tRNA hydrolase (Phytoplasma australiense).